The chain runs to 75 residues: Large ribosomal subunit protein bL31 (75 aa).

It belongs to the bacterial ribosomal protein bL31 family. Type A subfamily. As to quaternary structure, part of the 50S ribosomal subunit.

In terms of biological role, binds the 23S rRNA. The protein is Large ribosomal subunit protein bL31 of Chlorobium luteolum (strain DSM 273 / BCRC 81028 / 2530) (Pelodictyon luteolum).